A 784-amino-acid polypeptide reads, in one-letter code: LPS-assembly protein LptD (784 aa).

Positions 1–24 are cleaved as a signal peptide; sequence MKKRIPTLLATMIATALYSQQGLA. Cystine bridges form between C31-C724 and C173-C725.

The protein belongs to the LptD family. In terms of assembly, component of the lipopolysaccharide transport and assembly complex. Interacts with LptE and LptA. Post-translationally, contains two intramolecular disulfide bonds.

It is found in the cell outer membrane. Its function is as follows. Together with LptE, is involved in the assembly of lipopolysaccharide (LPS) at the surface of the outer membrane. In Escherichia coli O157:H7, this protein is LPS-assembly protein LptD.